Here is a 337-residue protein sequence, read N- to C-terminus: Nucleoid-associated protein HSM_0096 (337 aa).

This sequence belongs to the YejK family.

Its subcellular location is the cytoplasm. The protein localises to the nucleoid. The sequence is that of Nucleoid-associated protein HSM_0096 from Histophilus somni (strain 2336) (Haemophilus somnus).